The chain runs to 547 residues: MGCTFLPLESAFMLQFTRCFGSRTANKGFQLLPDFKLKCGLEIHTQLSTQNKLFSLSTNDPFASANLPNHHTSFFDVSLPGSQPKLNPEVVLFATKLAVALNSKVNLNSHFDRKHYFYADQPMGYQITQHYSPFAKGGFLELLGSLDSIDENSKRIQLVQLQIEQDTGKSVYRGSEGRSLIDLNRSNVPLIELVTQPNFTDLKQIRAFIKKFQNLVRHLGISTGDLETGAMRVDVNLSVNGYSRVELKNLPNTSSILSAIKYEYQRQVGLIQSGEADKYLSSSETRGWTGSSTVKLRSKETTIDYRYMPDPELPSIKISPGTVQSVSQSMPKLPDAVLHDLMSEPYGLALKDAKILAIKGNGHDQLYTQTSLLKYYLDTFSCYSTLAGQQLNPRLPTNWIIHELLGNLNRLQLPLEKAAEAFPPKKFAELLMLIQDDKISKASGKLLLFHILNEINKLSLAQPVDLSALIEGFDLNVIKKIDANELREICTEIVGGISDPKLIEGIVSGKKKNSLKFLIGQGMRVSQGRIKPHLFEQAFKELLKVKW.

The protein belongs to the GatB/GatE family. GatB subfamily. In terms of assembly, subunit of the heterotrimeric GatFAB amidotransferase (AdT) complex, composed of A, B and F subunits.

It localises to the mitochondrion. The enzyme catalyses L-glutamyl-tRNA(Gln) + L-glutamine + ATP + H2O = L-glutaminyl-tRNA(Gln) + L-glutamate + ADP + phosphate + H(+). Its function is as follows. Allows the formation of correctly charged Gln-tRNA(Gln) through the transamidation of misacylated Glu-tRNA(Gln) in the mitochondria. The reaction takes place in the presence of glutamine and ATP through an activated gamma-phospho-Glu-tRNA(Gln). The polypeptide is Glutamyl-tRNA(Gln) amidotransferase subunit B, mitochondrial (Lachancea thermotolerans (strain ATCC 56472 / CBS 6340 / NRRL Y-8284) (Yeast)).